The sequence spans 363 residues: UDP-3-O-acylglucosamine N-acyltransferase (363 aa).

The Proton acceptor role is filled by H252.

It belongs to the transferase hexapeptide repeat family. LpxD subfamily. As to quaternary structure, homotrimer.

The enzyme catalyses a UDP-3-O-[(3R)-3-hydroxyacyl]-alpha-D-glucosamine + a (3R)-hydroxyacyl-[ACP] = a UDP-2-N,3-O-bis[(3R)-3-hydroxyacyl]-alpha-D-glucosamine + holo-[ACP] + H(+). Its pathway is bacterial outer membrane biogenesis; LPS lipid A biosynthesis. Functionally, catalyzes the N-acylation of UDP-3-O-acylglucosamine using 3-hydroxyacyl-ACP as the acyl donor. Is involved in the biosynthesis of lipid A, a phosphorylated glycolipid that anchors the lipopolysaccharide to the outer membrane of the cell. In Cupriavidus taiwanensis (strain DSM 17343 / BCRC 17206 / CCUG 44338 / CIP 107171 / LMG 19424 / R1) (Ralstonia taiwanensis (strain LMG 19424)), this protein is UDP-3-O-acylglucosamine N-acyltransferase.